Reading from the N-terminus, the 160-residue chain is Large ribosomal subunit protein uL15 (160 aa).

A compositionally biased stretch (polar residues) spans 1-14; the sequence is MKLNDISDNPGSSK. The tract at residues 1–35 is disordered; sequence MKLNDISDNPGSSKSRMRVGRGIGSGKGKTCGRGV. Positions 21-35 are enriched in gly residues; that stretch reads RGIGSGKGKTCGRGV.

Belongs to the universal ribosomal protein uL15 family. Part of the 50S ribosomal subunit.

Functionally, binds to the 23S rRNA. This Beijerinckia indica subsp. indica (strain ATCC 9039 / DSM 1715 / NCIMB 8712) protein is Large ribosomal subunit protein uL15.